We begin with the raw amino-acid sequence, 96 residues long: Co-chaperonin GroES (96 aa).

Residues 26 to 48 (LLPGSAQEKPSQGEVLATGNGQI) form a disordered region.

This sequence belongs to the GroES chaperonin family. Heptamer of 7 subunits arranged in a ring. Interacts with the chaperonin GroEL.

It localises to the cytoplasm. Together with the chaperonin GroEL, plays an essential role in assisting protein folding. The GroEL-GroES system forms a nano-cage that allows encapsulation of the non-native substrate proteins and provides a physical environment optimized to promote and accelerate protein folding. GroES binds to the apical surface of the GroEL ring, thereby capping the opening of the GroEL channel. The polypeptide is Co-chaperonin GroES (Psychrobacter arcticus (strain DSM 17307 / VKM B-2377 / 273-4)).